The chain runs to 426 residues: Molybdopterin molybdenumtransferase 1 (426 aa).

This sequence belongs to the MoeA family. Requires Mg(2+) as cofactor.

It carries out the reaction adenylyl-molybdopterin + molybdate = Mo-molybdopterin + AMP + H(+). The protein operates within cofactor biosynthesis; molybdopterin biosynthesis. Functionally, catalyzes the insertion of molybdate into adenylated molybdopterin with the concomitant release of AMP. The chain is Molybdopterin molybdenumtransferase 1 (moeA1) from Mycobacterium tuberculosis (strain ATCC 25618 / H37Rv).